The chain runs to 1115 residues: G-protein coupled receptor GRL101 (1115 aa).

An N-terminal signal peptide occupies residues 1–24 (MATMSGTTIVCLIYLTTMLGNSQG). Topologically, residues 25–767 (VNLKIESPSP…SCEDLMSNHV (743 aa)) are extracellular. LDL-receptor class A domains follow at residues 36–79 (TLCS…TCGC), 77–115 (CGCLQSEFQCNHTTCIDKILRCDRNDDCSNGLDERECDI), 116–155 (YICPLGTHVKWHNHFCVPRDKQCDFLDDCGDNSDEKICER), 156–196 (RECV…ACDS), 195–232 (DSDKYFQCAEGSLIKKEFVCDGWVDCKLTFADELNCKL), 231–269 (KLCDEDDFRCSDTRCIQKSNVCDGYCDCKTCDDEEVCAN), 272–318 (YGCP…YCSN), 320–363 (SECK…SCLA), 365–403 (PKCSQDEFQCHHGKCIPISKRCDSVHDCVDWSDEMNCEN), 404–442 (HQCAANMKSCLSGHCIEEHKWCNFHRECPDGSDEKDCDP), 444–485 (PVCE…NCSQ), and 486–525 (HICLEGQFRCRKSFCINQTKVCDGTVDCLQGMWDENNCRY). Cystine bridges form between C38–C53, C46–C66, C60–C77, C79–C91, C86–C104, C98–C113, C118–C131, C138–C153, C158–C170, C165–C183, C177–C194, C202–C220, C214–C230, C233–C245, C240–C258, and C252–C267. N87 carries an N-linked (GlcNAc...) asparagine glycan. N166 carries N-linked (GlcNAc...) asparagine glycosylation. Residue N269 is glycosylated (N-linked (GlcNAc...) asparagine). Intrachain disulfides connect C274/C291, C282/C304, and C298/C316. Residue N318 is glycosylated (N-linked (GlcNAc...) asparagine). 15 cysteine pairs are disulfide-bonded: C322–C339, C334–C352, C346–C361, C367–C379, C374–C392, C386–C401, C406–C418, C413–C431, C425–C440, C446–C458, C453–C474, C465–C483, C488–C500, C495–C513, and C507–C523. N482 carries an N-linked (GlcNAc...) asparagine glycan. N502 carries an N-linked (GlcNAc...) asparagine glycan. The LRRNT domain maps to 518-562 (WDENNCRYWCPHGQAICQCEGVTMDCTGQKLKEMPVQQMEEDLSK). A glycan (N-linked (GlcNAc...) asparagine) is linked at N571. LRR repeat units lie at residues 584 to 605 (KVTYLDLSRNHLTEIPIYSFQN), 608 to 629 (KLTHLNLADNNITSLKNGSLLG), 632 to 653 (NLKQLHINGNKIETIEEDTFSS), 656 to 677 (HLTVLDLSNQRLTHVYKNMFKG), 680 to 701 (QITVLNISRNQINSIDNGAFNN), and 704 to 725 (NVRLIDLSGNVIKDIGQKVFMG). 2 N-linked (GlcNAc...) asparagine glycosylation sites follow: N618 and N624. N685 is a glycosylation site (N-linked (GlcNAc...) asparagine). Residues 768–788 (LRVSIWVLGVIALVGNFVVIF) traverse the membrane as a helical segment. The Cytoplasmic segment spans residues 789-801 (WRVRDFRGGKVHS). Residues 802–822 (FLITNLAIGDFLMGVYLLIIA) traverse the membrane as a helical segment. The Extracellular portion of the chain corresponds to 823–857 (TADTYYRGVYISHDENWKQSGLCQFAGFVSTFSSE). Residues 858-878 (LSVLTLSTITLDRLICILFPL) form a helical membrane-spanning segment. Residues 879-887 (RRTRLGLRQ) lie on the Cytoplasmic side of the membrane. The chain crosses the membrane as a helical span at residues 888 to 908 (AIIVMSCIWVLVFLLAVLPLL). At 909–941 (GFSYFENFYGRSGVCLALHVTPDRRPGWEYSVG) the chain is on the extracellular side. The chain crosses the membrane as a helical span at residues 942-962 (VFILLNLLSFVLIASSYLWMF). At 963–988 (SVAKKTRSAVRTAESKNDNAMARRMT) the chain is on the cytoplasmic side. Residues 989-1009 (LIVMTDFCCWVPIIVLGFVSL) traverse the membrane as a helical segment. The Extracellular segment spans residues 1010 to 1017 (AGARADDQ). A helical transmembrane segment spans residues 1018–1038 (VYAWIAVFVLPLNSATNPVIY). The Cytoplasmic portion of the chain corresponds to 1039-1115 (TLSTAPFLGN…YYNTELHSDS (77 aa)).

This sequence belongs to the G-protein coupled receptor 1 family. In terms of tissue distribution, predominantly expressed in a small number of neurons within the central nervous system and to a lesser extent in the heart.

Its subcellular location is the cell membrane. Functionally, might directly transduce signals carried by large extracellular lipoprotein complexes into neuronal events. This Lymnaea stagnalis (Great pond snail) protein is G-protein coupled receptor GRL101.